Here is a 449-residue protein sequence, read N- to C-terminus: Bifunctional protein GlmU (449 aa).

The segment at 1 to 225 is pyrophosphorylase; the sequence is MLSVAILAAG…NGELQGINNR (225 aa). UDP-N-acetyl-alpha-D-glucosamine is bound by residues 7 to 10, lysine 21, glutamine 73, and 78 to 79; these read LAAG and GT. A Mg(2+)-binding site is contributed by aspartate 103. UDP-N-acetyl-alpha-D-glucosamine is bound by residues glycine 140, glutamate 154, asparagine 169, and asparagine 223. Asparagine 223 is a binding site for Mg(2+). Residues 226–246 are linker; that stretch reads IHLSECEECIQNSIKEKHMLN. The segment at 247 to 449 is N-acetyltransferase; the sequence is GVTFINKASC…NIENWKKKKS (203 aa). UDP-N-acetyl-alpha-D-glucosamine contacts are provided by arginine 328 and lysine 346. The Proton acceptor role is filled by histidine 358. UDP-N-acetyl-alpha-D-glucosamine-binding residues include tyrosine 361 and asparagine 372. Positions 375, 418, and 435 each coordinate acetyl-CoA.

This sequence in the N-terminal section; belongs to the N-acetylglucosamine-1-phosphate uridyltransferase family. The protein in the C-terminal section; belongs to the transferase hexapeptide repeat family. In terms of assembly, homotrimer. Requires Mg(2+) as cofactor.

The protein resides in the cytoplasm. The enzyme catalyses alpha-D-glucosamine 1-phosphate + acetyl-CoA = N-acetyl-alpha-D-glucosamine 1-phosphate + CoA + H(+). It carries out the reaction N-acetyl-alpha-D-glucosamine 1-phosphate + UTP + H(+) = UDP-N-acetyl-alpha-D-glucosamine + diphosphate. It participates in nucleotide-sugar biosynthesis; UDP-N-acetyl-alpha-D-glucosamine biosynthesis; N-acetyl-alpha-D-glucosamine 1-phosphate from alpha-D-glucosamine 6-phosphate (route II): step 2/2. Its pathway is nucleotide-sugar biosynthesis; UDP-N-acetyl-alpha-D-glucosamine biosynthesis; UDP-N-acetyl-alpha-D-glucosamine from N-acetyl-alpha-D-glucosamine 1-phosphate: step 1/1. The protein operates within bacterial outer membrane biogenesis; LPS lipid A biosynthesis. In terms of biological role, catalyzes the last two sequential reactions in the de novo biosynthetic pathway for UDP-N-acetylglucosamine (UDP-GlcNAc). The C-terminal domain catalyzes the transfer of acetyl group from acetyl coenzyme A to glucosamine-1-phosphate (GlcN-1-P) to produce N-acetylglucosamine-1-phosphate (GlcNAc-1-P), which is converted into UDP-GlcNAc by the transfer of uridine 5-monophosphate (from uridine 5-triphosphate), a reaction catalyzed by the N-terminal domain. The sequence is that of Bifunctional protein GlmU from Prochlorococcus marinus (strain AS9601).